Reading from the N-terminus, the 292-residue chain is Xyloglucan endotransglucosylase/hydrolase protein 2 (292 aa).

The first 24 residues, 1-24 (MNRIRYCFELVSVLFLMFTANARA), serve as a signal peptide directing secretion. In terms of domain architecture, GH16 spans 25-219 (RGRGAIDFDV…WAYAPFKAQY (195 aa)). The active-site Nucleophile is the Glu-106. Glu-110 (proton donor) is an active-site residue. Xyloglucan is bound by residues Glu-110, 123–125 (QTN), 133–135 (GRE), 198–199 (NW), and Gly-203. 2 disulfide bridges follow: Cys-227–Cys-239 and Cys-275–Cys-288. Arg-280 contributes to the xyloglucan binding site.

The protein belongs to the glycosyl hydrolase 16 family. XTH group 1 subfamily. Post-translationally, contains at least one intrachain disulfide bond essential for its enzymatic activity.

It is found in the secreted. It localises to the cell wall. Its subcellular location is the extracellular space. The protein localises to the apoplast. It catalyses the reaction breaks a beta-(1-&gt;4) bond in the backbone of a xyloglucan and transfers the xyloglucanyl segment on to O-4 of the non-reducing terminal glucose residue of an acceptor, which can be a xyloglucan or an oligosaccharide of xyloglucan.. May catalyze xyloglucan endohydrolysis (XEH) and/or endotransglycosylation (XET). Cleaves and religates xyloglucan polymers, an essential constituent of the primary cell wall, and thereby participates in cell wall construction of growing tissues. This Arabidopsis thaliana (Mouse-ear cress) protein is Xyloglucan endotransglucosylase/hydrolase protein 2 (XTH2).